The sequence spans 830 residues: MTERKREHKDRKQKKNSPKNQSKVTKFLKWFFIGILLLGITAVTVVGIYVLSIIRSSPELDVQAIQSLNQPSILYDDQGNFMDNVITREQRYVVKSEEIPDNLKKAFVAIEDERFYEHKGIDIKRIFGVIASNIKGKLSGSNTVQGASTITQQLIKNAVLTNEVSYERKIKEMYLALELEKHLSKDEILTTYLNTIPMGGYQYGVSAAAQRFFSKNVSDLNLVECAYLGGLTQAPTSYDGLSEANKENPSRYLNRTKSVLFKMHELGYISSEQYNDAINEIDTNGIKFTPNNKLSKTNFEWFTRPAITQVKQDLMNKYKYTQEEVDKLIANGGLKIYTSMDRNLQNNVQKVLDDPNNYKAITNNPNEKNEDGVYKLQASATIIDYKTGHVKALVGGRGEQPAMSHNRAYYDLKSIGSATKPLTVYGPAIDLGLGGAGSVVNDSPLSNKELSSTGYKDQPKNEYNSYRGPLTFREAIKISSNLAAIKVANEVGVSNSIAYGEKLGLVYGPHSRGISTTALGQFQNDPNNPDGGNTYTLASAFGVFGNNGVKTNAKLYTKVLDSHGNVILDTSTPEETKIFSPQASYIVYDMLKDQVESGSAKPAKFGNIPVAGKTGTTTGDKDYLFAGLTPYYSAAIWIGYDKPREMRTSSGTVTSPIFGKIMGLAHKDLQYKEVEQPSGISKIAVCMDSGLKPTSLCTQDPRGSRVYYDWFINGSAPTQYCNYHTNLHVNAPDTNDNNNSGANEGNKQQETKPEEVKPNENNNNKPNEQNPNNKPDNTPANGNNNTNNNGGGNVTPPQNQTENNTNNGVITPPQAGNNQNQNGQNNNITQ.

The segment covering 1 to 17 (MTERKREHKDRKQKKNS) has biased composition (basic residues). The tract at residues 1-20 (MTERKREHKDRKQKKNSPKN) is disordered. Over 1–30 (MTERKREHKDRKQKKNSPKNQSKVTKFLKW) the chain is Cytoplasmic. A helical; Signal-anchor for type II membrane protein transmembrane segment spans residues 31–51 (FFIGILLLGITAVTVVGIYVL). Over 52-830 (SIIRSSPELD…QNGQNNNITQ (779 aa)) the chain is Extracellular. The tract at residues 72 to 244 (SILYDDQGNF…PTSYDGLSEA (173 aa)) is transglycosylase. Glu111 (proton donor; for transglycosylase activity) is an active-site residue. The tract at residues 378-663 (ASATIIDYKT…TSPIFGKIMG (286 aa)) is transpeptidase. The active-site Acyl-ester intermediate; for transpeptidase activity is the Ser417. The interval 731-830 (APDTNDNNNS…QNGQNNNITQ (100 aa)) is disordered. The segment covering 735–746 (NDNNNSGANEGN) has biased composition (low complexity). The segment covering 747 to 758 (KQQETKPEEVKP) has biased composition (basic and acidic residues). 2 stretches are compositionally biased toward low complexity: residues 759–807 (NENN…NTNN) and 816–830 (GNNQ…NITQ).

The protein in the N-terminal section; belongs to the glycosyltransferase 51 family. In the C-terminal section; belongs to the transpeptidase family.

It localises to the cell membrane. It catalyses the reaction [GlcNAc-(1-&gt;4)-Mur2Ac(oyl-L-Ala-gamma-D-Glu-L-Lys-D-Ala-D-Ala)](n)-di-trans,octa-cis-undecaprenyl diphosphate + beta-D-GlcNAc-(1-&gt;4)-Mur2Ac(oyl-L-Ala-gamma-D-Glu-L-Lys-D-Ala-D-Ala)-di-trans,octa-cis-undecaprenyl diphosphate = [GlcNAc-(1-&gt;4)-Mur2Ac(oyl-L-Ala-gamma-D-Glu-L-Lys-D-Ala-D-Ala)](n+1)-di-trans,octa-cis-undecaprenyl diphosphate + di-trans,octa-cis-undecaprenyl diphosphate + H(+). The enzyme catalyses Preferential cleavage: (Ac)2-L-Lys-D-Ala-|-D-Ala. Also transpeptidation of peptidyl-alanyl moieties that are N-acyl substituents of D-alanine.. The protein operates within cell wall biogenesis; peptidoglycan biosynthesis. In terms of biological role, cell wall formation. Synthesis of cross-linked peptidoglycan from the lipid intermediates. The enzyme has a penicillin-insensitive transglycosylase N-terminal domain (formation of linear glycan strands) and a penicillin-sensitive transpeptidase C-terminal domain (cross-linking of the peptide subunits). In Clostridium perfringens (strain ATCC 13124 / DSM 756 / JCM 1290 / NCIMB 6125 / NCTC 8237 / Type A), this protein is Penicillin-binding protein 1A (pbpA).